Reading from the N-terminus, the 208-residue chain is Pyridoxine/pyridoxamine 5'-phosphate oxidase (208 aa).

Residues 53-58 (RTVLLK), 68-69 (YS), K75, and Q100 contribute to the FMN site. A substrate-binding site is contributed by K58. Residues Y118, R122, and S126 each contribute to the substrate site. FMN contacts are provided by residues 135-136 (QS) and W180. Residue 186–188 (RLH) coordinates substrate. Residue R190 coordinates FMN.

This sequence belongs to the pyridoxamine 5'-phosphate oxidase family. Homodimer. The cofactor is FMN.

The catalysed reaction is pyridoxamine 5'-phosphate + O2 + H2O = pyridoxal 5'-phosphate + H2O2 + NH4(+). The enzyme catalyses pyridoxine 5'-phosphate + O2 = pyridoxal 5'-phosphate + H2O2. It participates in cofactor metabolism; pyridoxal 5'-phosphate salvage; pyridoxal 5'-phosphate from pyridoxamine 5'-phosphate: step 1/1. It functions in the pathway cofactor metabolism; pyridoxal 5'-phosphate salvage; pyridoxal 5'-phosphate from pyridoxine 5'-phosphate: step 1/1. Catalyzes the oxidation of either pyridoxine 5'-phosphate (PNP) or pyridoxamine 5'-phosphate (PMP) into pyridoxal 5'-phosphate (PLP). This Xylella fastidiosa (strain 9a5c) protein is Pyridoxine/pyridoxamine 5'-phosphate oxidase.